A 1361-amino-acid polypeptide reads, in one-letter code: Protein transport protein SEC16B homolog (1361 aa).

Ser-46 carries the post-translational modification Phosphoserine. 7 disordered regions span residues 82–109, 487–513, 984–1013, 1025–1062, 1163–1204, 1216–1235, and 1306–1361; these read NEGA…HSDA, VDDA…GRPP, PVGG…QEAT, SSLM…GRTP, ENKS…ARGR, NPPG…VQTA, and SVNG…EVEL. Residues 491–503 are compositionally biased toward low complexity; it reads PQSFQSSQLFSPS. Over residues 996-1013 the composition is skewed to polar residues; the sequence is TKGNLQGNEYQHQQQEAT. Polar residues-rich tracts occupy residues 1169–1200, 1222–1234, and 1308–1325; these read IPSN…NQFS, NSHT…SVQT, and NGDN…SWSG. The segment covering 1326-1354 has biased composition (low complexity); it reads NFNTSFTPPTSPSTFKPVLLNSSSSSLGE.

This sequence belongs to the SEC16 family.

It is found in the golgi apparatus. Its subcellular location is the endoplasmic reticulum. In terms of biological role, required for protein transport from the endoplasmic reticulum to the Golgi apparatus. This Arabidopsis thaliana (Mouse-ear cress) protein is Protein transport protein SEC16B homolog.